A 608-amino-acid polypeptide reads, in one-letter code: Threonine--tRNA ligase (608 aa).

The editing domain stretch occupies residues 1–143; the sequence is MRVLYIHAER…VFKPEEAKTE (143 aa). Catalytic regions lie at residues 194–490 and 195–490; these read PKYL…PRLP and KYLD…PRLP. Cys-287, His-338, and His-459 together coordinate Zn(2+).

It belongs to the class-II aminoacyl-tRNA synthetase family. In terms of assembly, homodimer. It depends on Zn(2+) as a cofactor.

It localises to the cytoplasm. The enzyme catalyses tRNA(Thr) + L-threonine + ATP = L-threonyl-tRNA(Thr) + AMP + diphosphate + H(+). In terms of biological role, catalyzes the attachment of threonine to tRNA(Thr) in a two-step reaction: L-threonine is first activated by ATP to form Thr-AMP and then transferred to the acceptor end of tRNA(Thr). Also edits incorrectly charged L-seryl-tRNA(Thr). The sequence is that of Threonine--tRNA ligase from Pyrobaculum arsenaticum (strain DSM 13514 / JCM 11321 / PZ6).